We begin with the raw amino-acid sequence, 400 residues long: Probable protein phosphatase 2C 64 (400 aa).

One can recognise a PPM-type phosphatase domain in the interval 47 to 355 (DFSMAVVQAN…DDITVIVVFF (309 aa)). Ser-75 carries the phosphoserine modification. Mn(2+) is bound by residues Asp-86, Gly-87, Asp-287, and Asp-346.

The protein belongs to the PP2C family. In terms of assembly, interacts with SAUR19. It depends on Mg(2+) as a cofactor. Mn(2+) serves as cofactor.

The enzyme catalyses O-phospho-L-seryl-[protein] + H2O = L-seryl-[protein] + phosphate. It catalyses the reaction O-phospho-L-threonyl-[protein] + H2O = L-threonyl-[protein] + phosphate. Its function is as follows. Dephosphorylates and represses plasma membrane H(+)-ATPases (PM H(+)-ATPases, e.g. AHA1 and AHA2), thus influencing negatively plant growth and fitness. This is Probable protein phosphatase 2C 64 from Arabidopsis thaliana (Mouse-ear cress).